The sequence spans 141 residues: Hemoglobin subunit alpha-A (141 aa).

The 141-residue stretch at 1–141 (VLSAADKNNV…VGTVLTAKYR (141 aa)) folds into the Globin domain. An O2-binding site is contributed by histidine 58. Histidine 87 lines the heme b pocket.

This sequence belongs to the globin family. Heterotetramer of two alpha chains and two beta chains. As to expression, red blood cells.

Involved in oxygen transport from the lung to the various peripheral tissues. This is Hemoglobin subunit alpha-A (HBAA) from Phasianus colchicus colchicus (Black-necked pheasant).